Reading from the N-terminus, the 79-residue chain is Hematopoietic cell signal transducer (79 aa).

An N-terminal signal peptide occupies residues Met-1–Ala-18. The Extracellular segment spans residues Gln-19–Pro-34. A helical membrane pass occupies residues Leu-35–Phe-55. The Cytoplasmic segment spans residues Leu-56–Gly-79. Tyr-72 is modified (phosphotyrosine). The interval Tyr-72 to Asn-74 is GRB2 binding site. Residues Tyr-72 to Met-75 are PIK3R1 binding site.

It belongs to the DAP10 family. Homodimer; Disulfide-linked. Heterohexamer composed of four subunits of HCST/DAP10 and two subunits of KLRK1. Interacts (via transmembrane domain) with KLRK1 (via transmembrane domain); the interaction is required for KLRK1 NK cell surface and induces NK cell-mediated cytotoxicity. Interacts with PIK3R1 and GRB2. Interacts with CLEC5A. Forms an CLEC5A/TYROBP/HCST trimolecular complex depending almost solely on TYROBP. Interacts with CD300H. Post-translationally, phosphorylated; PIK3R1 and GRB2 associate specifically with tyrosine-phosphorylated HCST. In terms of processing, O-glycosylated.

The protein resides in the membrane. Transmembrane adapter protein which associates with KLRK1 to form an activation receptor KLRK1-HCST in lymphoid and myeloid cells; this receptor plays a major role in triggering cytotoxicity against target cells expressing cell surface ligands such as MHC class I chain-related MICA and MICB, and UL16-binding proteins (ULBPs); these ligands are up-regulated by stress conditions and pathological state such as viral infection and tumor transformation. Functions as a docking site for PI3-kinase PIK3R1 and GRB2. Interaction of ULBPs with KLRK1-HCST triggers calcium mobilization and activation of the PIK3R1, MAP2K/ERK, and JAK2/STAT5 signaling pathways. Both PIK3R1 and GRB2 are required for full KLRK1-HCST-mediated activation and ultimate killing of target cells. In NK cells, KLRK1-HCST signaling directly induces cytotoxicity and enhances cytokine production initiated via DAP12/TYROBP-associated receptors. In T-cells, it provides primarily costimulation for TCR-induced signals. KLRK1-HCST receptor plays a role in immune surveillance against tumors and is required for cytolysis of tumors cells; indeed, melanoma cells that do not express KLRK1 ligands escape from immune surveillance mediated by NK cells. In Macaca mulatta (Rhesus macaque), this protein is Hematopoietic cell signal transducer (HCST).